The chain runs to 292 residues: MEYPWDDLTLAFSRTSMFPFFDIAHYLVSVMALKQRPGAVAAAWNNPLASWLSAMLHCFGGGILSCMLLAESPLKFLTNHTNILLASSIWYIVFFCPRDLVSQGYSYQPIQFLAAGMKEVTRTWKIVGGVSDANSYYRNAWIVMIVVGWARGAGGAVVTACEQLLKGDWKPEGDEWLKMSFPCKITLLGSIMFTFQHTRHLAISKHDLMFLYTIFLVTIKVTMMMTKDTAVTLTPFEDTLTRMLFGRRQQQQFSSSEKKTEVKPSSNGSASSASKRGAEPSGGAKRHAKKED.

Topologically, residues 1 to 16 (MEYPWDDLTLAFSRTS) are lumenal. The chain crosses the membrane as a helical span at residues 17 to 34 (MFPFFDIAHYLVSVMALK). The Cytoplasmic portion of the chain corresponds to 35 to 47 (QRPGAVAAAWNNP). A helical transmembrane segment spans residues 48 to 69 (LASWLSAMLHCFGGGILSCMLL). Residues 70–82 (AESPLKFLTNHTN) are Lumenal-facing. Residues 83-100 (ILLASSIWYIVFFCPRDL) traverse the membrane as a helical segment. Topologically, residues 101 to 103 (VSQ) are cytoplasmic. The chain crosses the membrane as a helical span at residues 104-122 (GYSYQPIQFLAAGMKEVTR). The a 1,2-diacyl-sn-glycero-3-phospho-(1D-myo-inositol-4,5-bisphosphate) site is built by lysine 118 and arginine 122. Topologically, residues 123–140 (TWKIVGGVSDANSYYRNA) are lumenal. The helical transmembrane segment at 141–158 (WIVMIVVGWARGAGGAVV) threads the bilayer. Over 159–178 (TACEQLLKGDWKPEGDEWLK) the chain is Cytoplasmic. Residues 179 to 195 (MSFPCKITLLGSIMFTF) form a helical membrane-spanning segment. Over 196-206 (QHTRHLAISKH) the chain is Lumenal. Residues 207–225 (DLMFLYTIFLVTIKVTMMM) form a helical membrane-spanning segment. Residues 226–292 (TKDTAVTLTP…GAKRHAKKED (67 aa)) lie on the Cytoplasmic side of the membrane. The interval 248–292 (RQQQQFSSSEKKTEVKPSSNGSASSASKRGAEPSGGAKRHAKKED) is disordered. Residues 265–274 (SSNGSASSAS) are compositionally biased toward low complexity.

This sequence belongs to the TMEM38 family. Homotrimer; conformation seems to be controled by binding to diacylglycerol (DAG). In terms of tissue distribution, widely expressed.

Its subcellular location is the endoplasmic reticulum membrane. The enzyme catalyses K(+)(in) = K(+)(out). Its activity is regulated as follows. Channel activity is activated by increased cytosolic Ca(2+) levels and blocked by luminal high Ca(2+) levels. Its function is as follows. Intracellular monovalent cation channel required for maintenance of rapid intracellular calcium release. Acts as a potassium counter-ion channel that functions in synchronization with calcium release from intracellular stores. Activated by increased cytosolic Ca(2+) levels. This Mus musculus (Mouse) protein is Trimeric intracellular cation channel type B (Tmem38b).